The sequence spans 211 residues: Cytidylate kinase (211 aa).

7 to 15 (GPAASGKGT) is an ATP binding site.

The protein belongs to the cytidylate kinase family. Type 1 subfamily.

The protein localises to the cytoplasm. It carries out the reaction CMP + ATP = CDP + ADP. It catalyses the reaction dCMP + ATP = dCDP + ADP. The protein is Cytidylate kinase of Rhodopseudomonas palustris (strain BisA53).